Here is a 109-residue protein sequence, read N- to C-terminus: Cell division protein ZapA (109 aa).

A coiled-coil region spans residues 21-99; it reads PDQRDALNQA…IEQALLEQGR (79 aa).

It belongs to the ZapA family. Type 1 subfamily. Homodimer. Interacts with FtsZ.

It is found in the cytoplasm. In terms of biological role, activator of cell division through the inhibition of FtsZ GTPase activity, therefore promoting FtsZ assembly into bundles of protofilaments necessary for the formation of the division Z ring. It is recruited early at mid-cell but it is not essential for cell division. This is Cell division protein ZapA from Shigella boydii serotype 18 (strain CDC 3083-94 / BS512).